The sequence spans 354 residues: Molybdenum import ATP-binding protein ModC (354 aa).

Residues 1–229 (MLELDFEQQL…SALRLWLQKE (229 aa)) enclose the ABC transporter domain. 31–38 (GLSGAGKT) provides a ligand contact to ATP. Residues 289–354 (GSSIRNILAV…IKSVSFHRQL (66 aa)) form the Mop domain.

This sequence belongs to the ABC transporter superfamily. Molybdate importer (TC 3.A.1.8) family. As to quaternary structure, the complex is composed of two ATP-binding proteins (ModC), two transmembrane proteins (ModB) and a solute-binding protein (ModA).

It localises to the cell inner membrane. It carries out the reaction molybdate(out) + ATP + H2O = molybdate(in) + ADP + phosphate + H(+). In terms of biological role, part of the ABC transporter complex ModABC involved in molybdenum import. Responsible for energy coupling to the transport system. This is Molybdenum import ATP-binding protein ModC from Photorhabdus laumondii subsp. laumondii (strain DSM 15139 / CIP 105565 / TT01) (Photorhabdus luminescens subsp. laumondii).